We begin with the raw amino-acid sequence, 286 residues long: ATP synthase gamma chain (286 aa).

Belongs to the ATPase gamma chain family. In terms of assembly, F-type ATPases have 2 components, CF(1) - the catalytic core - and CF(0) - the membrane proton channel. CF(1) has five subunits: alpha(3), beta(3), gamma(1), delta(1), epsilon(1). CF(0) has three main subunits: a, b and c.

Its subcellular location is the cell inner membrane. Produces ATP from ADP in the presence of a proton gradient across the membrane. The gamma chain is believed to be important in regulating ATPase activity and the flow of protons through the CF(0) complex. This is ATP synthase gamma chain from Pseudomonas aeruginosa (strain UCBPP-PA14).